Reading from the N-terminus, the 376-residue chain is Chaperone protein DnaJ (376 aa).

One can recognise a J domain in the interval 5–72 (DFYEVLGVPK…QKRAAYDQYG (68 aa)). A CR-type zinc finger spans residues 136 to 214 (GKEAQIRIPS…CHGQGRVKKQ (79 aa)). C149, C152, C166, C169, C188, C191, C202, and C205 together coordinate Zn(2+). CXXCXGXG motif repeat units lie at residues 149–156 (CETCHGSG), 166–173 (CGTCQGSG), 188–195 (CPHCRGTG), and 202–209 (CTACHGQG). 2 disordered regions span residues 227 to 246 (DGMR…GGPP) and 352 to 376 (SLKK…SFFS). A compositionally biased stretch (gly residues) spans 237–246 (GEPGTNGGPP). Residues 367-376 (WTDRLKSFFS) show a composition bias toward basic and acidic residues.

The protein belongs to the DnaJ family. Homodimer. The cofactor is Zn(2+).

The protein localises to the cytoplasm. Its function is as follows. Participates actively in the response to hyperosmotic and heat shock by preventing the aggregation of stress-denatured proteins and by disaggregating proteins, also in an autonomous, DnaK-independent fashion. Unfolded proteins bind initially to DnaJ; upon interaction with the DnaJ-bound protein, DnaK hydrolyzes its bound ATP, resulting in the formation of a stable complex. GrpE releases ADP from DnaK; ATP binding to DnaK triggers the release of the substrate protein, thus completing the reaction cycle. Several rounds of ATP-dependent interactions between DnaJ, DnaK and GrpE are required for fully efficient folding. Also involved, together with DnaK and GrpE, in the DNA replication of plasmids through activation of initiation proteins. The sequence is that of Chaperone protein DnaJ from Acidovorax sp. (strain JS42).